The chain runs to 471 residues: Glutamine synthetase (471 aa).

The GS beta-grasp domain occupies 14–99 (QKIQMIDLKF…ICSIKEPRTG (86 aa)). In terms of domain architecture, GS catalytic spans 106–471 (PRVIAQKAID…PYEFYLYYDC (366 aa)). Residues Glu131 and Glu133 each contribute to the Mg(2+) site. Glu208 contacts ATP. Mg(2+) contacts are provided by Glu213 and Glu221. Residues 265 to 266 (NG) and Gly266 contribute to the L-glutamate site. Mg(2+) is bound at residue His270. Residues 272–274 (HQS) and Ser274 each bind ATP. Residues Arg322, Glu328, and Arg340 each contribute to the L-glutamate site. Residues Arg340, Arg345, and Lys354 each contribute to the ATP site. Position 359 (Glu359) interacts with Mg(2+). Arg361 lines the L-glutamate pocket. Tyr399 bears the O-AMP-tyrosine mark.

Belongs to the glutamine synthetase family. In terms of assembly, oligomer of 12 subunits arranged in the form of two hexagons. Mg(2+) serves as cofactor.

Its subcellular location is the cytoplasm. The enzyme catalyses L-glutamate + NH4(+) + ATP = L-glutamine + ADP + phosphate + H(+). With respect to regulation, the activity of this enzyme could be controlled by adenylation under conditions of abundant glutamine. Involved in nitrogen metabolism via ammonium assimilation. Catalyzes the ATP-dependent biosynthesis of glutamine from glutamate and ammonia. The sequence is that of Glutamine synthetase from Microchaete diplosiphon (Fremyella diplosiphon).